Here is a 375-residue protein sequence, read N- to C-terminus: Lipid-A-disaccharide synthase (375 aa).

It belongs to the LpxB family.

It catalyses the reaction a lipid X + a UDP-2-N,3-O-bis[(3R)-3-hydroxyacyl]-alpha-D-glucosamine = a lipid A disaccharide + UDP + H(+). It participates in bacterial outer membrane biogenesis; LPS lipid A biosynthesis. Condensation of UDP-2,3-diacylglucosamine and 2,3-diacylglucosamine-1-phosphate to form lipid A disaccharide, a precursor of lipid A, a phosphorylated glycolipid that anchors the lipopolysaccharide to the outer membrane of the cell. The chain is Lipid-A-disaccharide synthase from Pseudomonas putida (strain W619).